The following is a 114-amino-acid chain: Cytochrome c oxidase subunit 7A2-like, mitochondrial (114 aa).

The N-terminal 55 residues, 1 to 55 (MYYKFSGFTQKLAGAWASDAYSPQGLRPVVSTEAPPIIFATPTKLSSGPTAYDYA), are a transit peptide targeting the mitochondrion. Lysine 69 is modified (N6-acetyllysine). The chain crosses the membrane as a helical span at residues 82-107 (PDQMLYRTTMALTVGGTIYCLIALYM).

Belongs to the cytochrome c oxidase VIIa family. Interacts with the mitochondrial respiratory complexes III (CIII) and IV (CIV), promoting their association.

The protein resides in the mitochondrion inner membrane. Functionally, assembly factor that mediates the formation of some mitochondrial respiratory supercomplexes (respirasomes), thereby promoting oxidative phosphorylation and energy metabolism. Acts as a molecular adapter that associates with both mitochondrial respiratory complexes III (CIII) and IV (CIV), promoting their association. Mediates the formation of various mitochondrial respiratory supercomplexes, such as MCIII(2)IV(2), composed of two CIII and two CIV, and the CS-respirasome (MCI(1)III(2)IV(2)), composed of one CI, two CIII and two CIV. Not involved in the formation of the canonical respirasome (MCI(1)III(2)IV(1)), composed of one CI, two CIII and one CIV. The formation of different respirasomes is important for cell adaptation to oxygen conditions and prevent metabolic exhaustion: supercomplexes mediated by COX7A2L/SCAF1 are required to maintain oxidative phosphorylation upon low oxygen conditions and promote metabolic rewiring toward glycolysis. In Bos taurus (Bovine), this protein is Cytochrome c oxidase subunit 7A2-like, mitochondrial.